Consider the following 365-residue polypeptide: Peptide chain release factor 2 (365 aa).

Q252 carries the post-translational modification N5-methylglutamine.

Belongs to the prokaryotic/mitochondrial release factor family. Post-translationally, methylated by PrmC. Methylation increases the termination efficiency of RF2.

It is found in the cytoplasm. Peptide chain release factor 2 directs the termination of translation in response to the peptide chain termination codons UGA and UAA. The chain is Peptide chain release factor 2 from Colwellia psychrerythraea (strain 34H / ATCC BAA-681) (Vibrio psychroerythus).